The chain runs to 351 residues: Putative F-box protein At4g09790 (351 aa).

The F-box domain occupies 1-51 (MTTICDLPRDLVARILSRVPLTSMRRVRFTCKRWNTISKDPSFAKTHFGKA).

The polypeptide is Putative F-box protein At4g09790 (Arabidopsis thaliana (Mouse-ear cress)).